Reading from the N-terminus, the 485-residue chain is Glutamyl-tRNA(Gln) amidotransferase subunit A (485 aa).

Active-site charge relay system residues include lysine 79 and serine 154. The Acyl-ester intermediate role is filled by serine 178.

This sequence belongs to the amidase family. GatA subfamily. Heterotrimer of A, B and C subunits.

The catalysed reaction is L-glutamyl-tRNA(Gln) + L-glutamine + ATP + H2O = L-glutaminyl-tRNA(Gln) + L-glutamate + ADP + phosphate + H(+). Allows the formation of correctly charged Gln-tRNA(Gln) through the transamidation of misacylated Glu-tRNA(Gln) in organisms which lack glutaminyl-tRNA synthetase. The reaction takes place in the presence of glutamine and ATP through an activated gamma-phospho-Glu-tRNA(Gln). The protein is Glutamyl-tRNA(Gln) amidotransferase subunit A of Clostridium botulinum (strain Langeland / NCTC 10281 / Type F).